Here is a 291-residue protein sequence, read N- to C-terminus: MEMO1 family protein PH1626 (291 aa).

The protein belongs to the MEMO1 family.

This chain is MEMO1 family protein PH1626, found in Pyrococcus horikoshii (strain ATCC 700860 / DSM 12428 / JCM 9974 / NBRC 100139 / OT-3).